A 103-amino-acid polypeptide reads, in one-letter code: Pyrimidine/purine nucleoside phosphorylase (103 aa).

It belongs to the nucleoside phosphorylase PpnP family.

It carries out the reaction a purine D-ribonucleoside + phosphate = a purine nucleobase + alpha-D-ribose 1-phosphate. It catalyses the reaction adenosine + phosphate = alpha-D-ribose 1-phosphate + adenine. The catalysed reaction is cytidine + phosphate = cytosine + alpha-D-ribose 1-phosphate. The enzyme catalyses guanosine + phosphate = alpha-D-ribose 1-phosphate + guanine. It carries out the reaction inosine + phosphate = alpha-D-ribose 1-phosphate + hypoxanthine. It catalyses the reaction thymidine + phosphate = 2-deoxy-alpha-D-ribose 1-phosphate + thymine. The catalysed reaction is uridine + phosphate = alpha-D-ribose 1-phosphate + uracil. The enzyme catalyses xanthosine + phosphate = alpha-D-ribose 1-phosphate + xanthine. Catalyzes the phosphorolysis of diverse nucleosides, yielding D-ribose 1-phosphate and the respective free bases. Can use uridine, adenosine, guanosine, cytidine, thymidine, inosine and xanthosine as substrates. Also catalyzes the reverse reactions. This Shewanella sp. (strain ANA-3) protein is Pyrimidine/purine nucleoside phosphorylase.